Reading from the N-terminus, the 233-residue chain is Large ribosomal subunit protein uL1 (233 aa).

Belongs to the universal ribosomal protein uL1 family. As to quaternary structure, part of the 50S ribosomal subunit.

Binds directly to 23S rRNA. The L1 stalk is quite mobile in the ribosome, and is involved in E site tRNA release. Its function is as follows. Protein L1 is also a translational repressor protein, it controls the translation of the L11 operon by binding to its mRNA. The chain is Large ribosomal subunit protein uL1 from Psychrobacter cryohalolentis (strain ATCC BAA-1226 / DSM 17306 / VKM B-2378 / K5).